The primary structure comprises 203 residues: Large ribosomal subunit protein bL25 (203 aa).

The protein belongs to the bacterial ribosomal protein bL25 family. CTC subfamily. In terms of assembly, part of the 50S ribosomal subunit; part of the 5S rRNA/L5/L18/L25 subcomplex. Contacts the 5S rRNA. Binds to the 5S rRNA independently of L5 and L18.

This is one of the proteins that binds to the 5S RNA in the ribosome where it forms part of the central protuberance. In Cereibacter sphaeroides (strain ATCC 17025 / ATH 2.4.3) (Rhodobacter sphaeroides), this protein is Large ribosomal subunit protein bL25.